The sequence spans 423 residues: Glucose-1-phosphate adenylyltransferase (423 aa).

Residues Y108, G173, 188–189 (EK), and S207 each bind alpha-D-glucose 1-phosphate.

Belongs to the bacterial/plant glucose-1-phosphate adenylyltransferase family. Homotetramer.

It catalyses the reaction alpha-D-glucose 1-phosphate + ATP + H(+) = ADP-alpha-D-glucose + diphosphate. It functions in the pathway glycan biosynthesis; glycogen biosynthesis. Its function is as follows. Involved in the biosynthesis of ADP-glucose, a building block required for the elongation reactions to produce glycogen. Catalyzes the reaction between ATP and alpha-D-glucose 1-phosphate (G1P) to produce pyrophosphate and ADP-Glc. In Francisella tularensis subsp. novicida (strain U112), this protein is Glucose-1-phosphate adenylyltransferase.